The following is a 236-amino-acid chain: Lectin alpha chain (236 aa).

Residues glutamate 8 and aspartate 10 each contribute to the Mn(2+) site. Ca(2+)-binding residues include aspartate 10, tyrosine 12, asparagine 14, and aspartate 19. Tyrosine 12 contributes to the a carbohydrate binding site. Residues aspartate 19, histidine 24, and serine 34 each contribute to the Mn(2+) site. Residue 99–100 (LY) coordinates a carbohydrate. Residue aspartate 207 coordinates Ca(2+). Arginine 227 is a binding site for a carbohydrate.

It belongs to the leguminous lectin family. As to quaternary structure, equilibrium between homodimer and homotetramer. Oligomerization is pH-dependent with homotetramers forming at pH 6.5 and above. In terms of processing, the beta and gamma chains are produced by partial proteolytic processing of the lectin alpha chain by an asparaginyl endopeptidase. Mixture of 60% alpha lectin and 40% of its beta and gamma proteolytic fragments. As to expression, seed.

Its function is as follows. D-mannose/D-glucose-binding lectin. Has anti-inflammatory activity in rats. Induces histamine release in mast cells from rat. Induces lymphocyte proliferation and IFNG production. In Cratylia argentea (Cratylia floribunda), this protein is Lectin alpha chain.